The chain runs to 148 residues: Large ribosomal subunit protein uL15 (148 aa).

Positions 1–51 (MNLSSLKPAEGAVKSRKRIGRGPGSGLGGTSTRGHKGAKSRSGYSKKIGFE) are disordered. Positions 21-31 (RGPGSGLGGTS) are enriched in gly residues.

This sequence belongs to the universal ribosomal protein uL15 family. As to quaternary structure, part of the 50S ribosomal subunit.

Functionally, binds to the 23S rRNA. The chain is Large ribosomal subunit protein uL15 from Porphyromonas gingivalis (strain ATCC BAA-308 / W83).